We begin with the raw amino-acid sequence, 185 residues long: MELVVQSRETDKKSVIKKIRQQGGIPAVLYSGGKSLANIVVDARVFSKFLSTLESGALASTVFTLSYEGREIKALVKDIQYHVTTYDVIHLDFEELVDGRDVRLNIPIRYINTVDCVGVKLGGSLRQVIRCIRVVCKPKDIVPFLELDVQSLGLSQTLKLSDICIPEGIRPVTSLKEVAVTVARR.

The protein belongs to the bacterial ribosomal protein bL25 family. CTC subfamily. As to quaternary structure, part of the 50S ribosomal subunit; part of the 5S rRNA/L5/L18/L25 subcomplex. Contacts the 5S rRNA. Binds to the 5S rRNA independently of L5 and L18.

In terms of biological role, this is one of the proteins that binds to the 5S RNA in the ribosome where it forms part of the central protuberance. The protein is Large ribosomal subunit protein bL25 of Chlamydia trachomatis serovar A (strain ATCC VR-571B / DSM 19440 / HAR-13).